The primary structure comprises 701 residues: Ribosomal RNA large subunit methyltransferase K/L (701 aa).

Residues 44-155 (QAYKICLWSR…SDKLTVYLDL (112 aa)) enclose the THUMP domain.

It belongs to the methyltransferase superfamily. RlmKL family.

It is found in the cytoplasm. It catalyses the reaction guanosine(2445) in 23S rRNA + S-adenosyl-L-methionine = N(2)-methylguanosine(2445) in 23S rRNA + S-adenosyl-L-homocysteine + H(+). It carries out the reaction guanosine(2069) in 23S rRNA + S-adenosyl-L-methionine = N(2)-methylguanosine(2069) in 23S rRNA + S-adenosyl-L-homocysteine + H(+). Functionally, specifically methylates the guanine in position 2445 (m2G2445) and the guanine in position 2069 (m7G2069) of 23S rRNA. The chain is Ribosomal RNA large subunit methyltransferase K/L from Pseudoalteromonas atlantica (strain T6c / ATCC BAA-1087).